Consider the following 546-residue polypeptide: Oncoprotein-induced transcript 3 protein (546 aa).

Residues 1–16 form the signal peptide; the sequence is MPLSLLLACLFTTVTL. Residues Asn89 and Asn116 are each glycosylated (N-linked (GlcNAc...) asparagine). Residues 182–222 enclose the EGF-like; calcium-binding domain; sequence DENECEHNNGGCSEICVNLKNSHRCACGVGRVLRSDGKTCE. Cystine bridges form between Cys186–Cys197, Cys193–Cys206, and Cys208–Cys221. The 256-residue stretch at 261–516 folds into the ZP domain; the sequence is TCQVPVLCKS…SRCAQGCHRR (256 aa). An N-linked (GlcNAc...) asparagine glycan is attached at Asn299. The interval 524 to 546 is disordered; that stretch reads DEDSAGLQSQTLTGGPISIDWEE.

The protein localises to the nucleus envelope. May be involved in hepatocellular function and development. The sequence is that of Oncoprotein-induced transcript 3 protein (Oit3) from Rattus norvegicus (Rat).